Consider the following 459-residue polypeptide: Nuclear distribution protein nudF 1 (459 aa).

The LisH domain maps to 9 to 41; sequence QAEELHKSIIAYLSANNLSNAASALRGELGLSE. Residues 61-88 adopt a coiled-coil conformation; it reads TSIVRLQKKIMDLEARCGALQTELNNAT. 8 WD repeats span residues 114 to 155, 157 to 197, 201 to 240, 243 to 282, 288 to 349, 351 to 390, 395 to 440, and 442 to 459; these read SHRN…TTLK, HTRA…KNIR, GHEHSVSAVRFIPGRNLLTSASRDKDLRIWDVTTGFCVKT, GHSGWVRDVCPSFDGNYLFSAGDDVTARLWDITNISNPEA, GHDH…LMTL, GHDNWVRAIVFHPGGKYLLSASDDKSIRCWDLSQDGKCVK, AHGR…PQVQ, and RCVVASGGVDQKLNIFAN.

The protein belongs to the WD repeat LIS1/nudF family. As to quaternary structure, self-associates. Interacts with nudE and dynein.

It localises to the cytoplasm. It is found in the cytoskeleton. The protein localises to the spindle pole. Functionally, positively regulates the activity of the minus-end directed microtubule motor protein dynein. May enhance dynein-mediated microtubule sliding by targeting dynein to the microtubule plus end. Required for nuclear migration during vegetative growth as well as development. Required for retrograde early endosome (EE) transport from the hyphal tip. Required for localization of dynein to the mitotic spindle poles. Recruits additional proteins to the dynein complex at SPBs. The protein is Nuclear distribution protein nudF 1 of Talaromyces marneffei (strain ATCC 18224 / CBS 334.59 / QM 7333) (Penicillium marneffei).